A 97-amino-acid polypeptide reads, in one-letter code: MRHATSPIVFCFLIFLVMNHVKGQAKKKRCPIGLHTYGKCGTDRAKFCFSEIESKLSFSKQVLNTISSCRCDDDRQGNKDLYWCQCDRREGRPCPAN.

An N-terminal signal peptide occupies residues 1–23 (MRHATSPIVFCFLIFLVMNHVKG). 4 disulfides stabilise this stretch: C30–C94, C40–C71, C48–C84, and C69–C86.

Belongs to the DEFL family.

Its subcellular location is the secreted. In Arabidopsis thaliana (Mouse-ear cress), this protein is Putative defensin-like protein 237 (SCRL21).